The chain runs to 77 residues: Translation initiation factor IF-1, chloroplastic (77 aa).

An S1-like domain is found at 1–71 (MKEQKWIHEG…TRGRIIYRLR (71 aa)).

It belongs to the IF-1 family. In terms of assembly, component of the 30S ribosomal translation pre-initiation complex which assembles on the 30S ribosome in the order IF-2 and IF-3, IF-1 and N-formylmethionyl-tRNA(fMet); mRNA recruitment can occur at any time during PIC assembly.

Its subcellular location is the plastid. The protein resides in the chloroplast. In terms of biological role, one of the essential components for the initiation of protein synthesis. Stabilizes the binding of IF-2 and IF-3 on the 30S subunit to which N-formylmethionyl-tRNA(fMet) subsequently binds. Helps modulate mRNA selection, yielding the 30S pre-initiation complex (PIC). Upon addition of the 50S ribosomal subunit IF-1, IF-2 and IF-3 are released leaving the mature 70S translation initiation complex. In Garrya elliptica (Wavyleaf silktassel), this protein is Translation initiation factor IF-1, chloroplastic.